Consider the following 236-residue polypeptide: SERTA domain-containing protein 1 (236 aa).

The tract at residues 1-20 (MLSKGLKRKREEEEEKEPLA) is disordered. Residues 38-85 (PAVASSSLFDLSVLKLHHSLQQSEPDLRHLVLVVNTLRRIQASMAPAA) form the SERTA domain. Residues 189–211 (PASEGLKPGPEDGPGKEEAPELD) form a disordered region. Basic and acidic residues predominate over residues 197-207 (GPEDGPGKEEA).

Interacts with the PHD-bromodomain of TIF1, TRIM28/TIF1B and p300/CBP. Interacts with E2F1 and TFDP1; modulates transactivation activity of TFDP1/E2F complexes. Also interacts with CDK4. In terms of processing, polyubiquitinated, which promotes proteasomal degradation.

Acts at E2F-responsive promoters as coregulator to integrate signals provided by PHD- and/or bromodomain-containing transcription factors. Stimulates E2F1/TFDP1 transcriptional activity. Renders the activity of cyclin D1/CDK4 resistant to the inhibitory effects of CDKN2A/p16INK4A. The protein is SERTA domain-containing protein 1 (SERTAD1) of Homo sapiens (Human).